We begin with the raw amino-acid sequence, 260 residues long: 5'-nucleotidase SurE (260 aa).

A divalent metal cation is bound by residues Asp-10, Asp-11, Ser-41, and Asn-95.

It belongs to the SurE nucleotidase family. It depends on a divalent metal cation as a cofactor.

The protein resides in the cytoplasm. The catalysed reaction is a ribonucleoside 5'-phosphate + H2O = a ribonucleoside + phosphate. In terms of biological role, nucleotidase that shows phosphatase activity on nucleoside 5'-monophosphates. The sequence is that of 5'-nucleotidase SurE from Methanoregula boonei (strain DSM 21154 / JCM 14090 / 6A8).